A 114-amino-acid polypeptide reads, in one-letter code: Cytokine SCM-1 beta (114 aa).

Positions 1-21 are cleaved as a signal peptide; sequence MRLLILALLGICSLTAYIVEG. A disulfide bridge connects residues Cys32 and Cys69. A disordered region spans residues 91-114; the sequence is RNNMIQTKPTGTQQSTNTAVTLTG.

The protein belongs to the intercrine gamma family.

The protein localises to the secreted. Its function is as follows. Chemotactic activity for lymphocytes but not for monocytes or neutrophils. This is Cytokine SCM-1 beta (XCL2) from Homo sapiens (Human).